Reading from the N-terminus, the 243-residue chain is Pyridoxine 5'-phosphate synthase (243 aa).

Asparagine 9 contributes to the 3-amino-2-oxopropyl phosphate binding site. A 1-deoxy-D-xylulose 5-phosphate-binding site is contributed by aspartate 11–histidine 12. Residue arginine 20 participates in 3-amino-2-oxopropyl phosphate binding. The active-site Proton acceptor is histidine 45. 1-deoxy-D-xylulose 5-phosphate is bound by residues arginine 47 and histidine 52. The active-site Proton acceptor is glutamate 72. Residue threonine 102 coordinates 1-deoxy-D-xylulose 5-phosphate. Histidine 193 serves as the catalytic Proton donor. 3-amino-2-oxopropyl phosphate contacts are provided by residues glycine 194 and glycine 215 to histidine 216.

Belongs to the PNP synthase family. Homooctamer; tetramer of dimers.

It localises to the cytoplasm. The catalysed reaction is 3-amino-2-oxopropyl phosphate + 1-deoxy-D-xylulose 5-phosphate = pyridoxine 5'-phosphate + phosphate + 2 H2O + H(+). The protein operates within cofactor biosynthesis; pyridoxine 5'-phosphate biosynthesis; pyridoxine 5'-phosphate from D-erythrose 4-phosphate: step 5/5. Its function is as follows. Catalyzes the complicated ring closure reaction between the two acyclic compounds 1-deoxy-D-xylulose-5-phosphate (DXP) and 3-amino-2-oxopropyl phosphate (1-amino-acetone-3-phosphate or AAP) to form pyridoxine 5'-phosphate (PNP) and inorganic phosphate. This chain is Pyridoxine 5'-phosphate synthase, found in Escherichia coli O6:H1 (strain CFT073 / ATCC 700928 / UPEC).